Consider the following 147-residue polypeptide: Lysozyme C-1 (147 aa).

The N-terminal stretch at 1–18 (MKALLTLVFCLLPLAAQG) is a signal peptide. Residues 19–147 (KVYSRCELAA…VSKWIRGCRL (129 aa)) form the C-type lysozyme domain. 4 cysteine pairs are disulfide-bonded: Cys-24–Cys-145, Cys-48–Cys-133, Cys-82–Cys-98, and Cys-94–Cys-112. Residues Glu-53 and Asp-70 contribute to the active site.

The protein belongs to the glycosyl hydrolase 22 family.

It localises to the secreted. The enzyme catalyses Hydrolysis of (1-&gt;4)-beta-linkages between N-acetylmuramic acid and N-acetyl-D-glucosamine residues in a peptidoglycan and between N-acetyl-D-glucosamine residues in chitodextrins.. Lysozymes have primarily a bacteriolytic function; those in tissues and body fluids are associated with the monocyte-macrophage system and enhance the activity of immunoagents. In Anas platyrhynchos (Mallard), this protein is Lysozyme C-1.